Here is a 453-residue protein sequence, read N- to C-terminus: Zinc finger protein Pegasus (453 aa).

C2H2-type zinc fingers lie at residues 101–123 (LKCR…IRIH), 129–151 (HRCH…MRSH), and 157–180 (YKCE…RRKH). Polar residues predominate over residues 279–293 (GQLSSLPPDTQNPAS). A disordered region spans residues 279 to 375 (GQLSSLPPDT…QPSTPAPALP (97 aa)). A compositionally biased stretch (low complexity) spans 315-332 (CSSAVSTSVAQSSSPASP). Residues 356–368 (RTSTPSISNSQPS) are compositionally biased toward polar residues. 2 C2H2-type zinc fingers span residues 383–405 (HHCQ…MGCH) and 411–438 (FQCN…CCQH).

It belongs to the Ikaros C2H2-type zinc-finger protein family. In terms of assembly, probably self-associates.

The protein resides in the nucleus. In terms of biological role, transcriptional repressor that binds the core 5'GNNTGTNG-3' DNA consensus sequence. The sequence is that of Zinc finger protein Pegasus (ikzf5) from Xenopus laevis (African clawed frog).